Consider the following 1486-residue polypeptide: Glutamate synthase [NADPH] large chain (1486 aa).

Positions 1 to 11 (MLYDKSLERDN) are excised as a propeptide. The active-site Nucleophile is C12. The region spanning 12–402 (CGFGLIAHIE…PGELMVIDTR (391 aa)) is the Glutamine amidotransferase type-2 domain. Residue 1049–1101 (LVETQQALVANGLRHKIRLQVDGGLKTGVDIIKAAILGAESFGFGTGPMVALG) participates in FMN binding. [3Fe-4S] cluster-binding residues include C1102, C1108, and C1113.

The protein belongs to the glutamate synthase family. Aggregate of 4 catalytic active heterodimers, consisting of a large and a small subunit. [3Fe-4S] cluster is required as a cofactor. The cofactor is FAD. FMN serves as cofactor.

The enzyme catalyses 2 L-glutamate + NADP(+) = L-glutamine + 2-oxoglutarate + NADPH + H(+). It participates in amino-acid biosynthesis; L-glutamate biosynthesis via GLT pathway; L-glutamate from 2-oxoglutarate and L-glutamine (NADP(+) route): step 1/1. Its pathway is energy metabolism; nitrogen metabolism. Catalyzes the conversion of L-glutamine and 2-oxoglutarate into two molecules of L-glutamate. The chain is Glutamate synthase [NADPH] large chain (gltB) from Escherichia coli (strain K12).